A 720-amino-acid chain; its full sequence is MQNEIKKVCVIGAGVMGSGIAALIANSSHQVVLLDILDKDSNDPNKIVKNSVKNLHKQKLSPLSFPDKVNFITIGNLEHDLDLIKECNLVIEVIVEKLEIKHQLYNKIIPYLKEDAIIASNTSTLPLKKLKVNLPNNIKSRFVITHFFNPPRYMELVELIIDHTIKDEVIEKVSVFLTKMLGKTIIKCNDTPGFIANRVGCFLLELVVHKAIAQNLNFVTIDQIFSRCLGLPNTGIFGLYDLIGHDVMKLISSSLISALPKSDDYHRIYTNTKVFDKMIEHNLIGRKGEGGFYRLSVSNGKKIKEVINISDLSYHPVQKVDISFNSLNELLSSNSIYGKFFSEIITEFYIYLTSLVPSVTNNIYDIDTTMKLGYSWHYGPFELLTIAVKNGWNLIIKNADLMNIPLPKYLASKEYQKIDKQKFNSKKDFLQESKIVLSNDSANLIHYCENLVFVITTKMNSLNHNVFYLLQEAVSKAENYGKNLYIYPQGNNFSAGADLKLILSYIQDGNFHNLENLLKLGQQTMRYLKYSSVHIISCARGVALGGGCELLLNSSYIVANQELNAGLIELGVGLIPGWTGVTEMFARSNGNKTKLIRNIKNIIEQNKTSSADYFKADYGIKNMQVNMNKHYILDDALKLRISKKIVSIPNKITLPKINIVSEIDTSKYNELQNKVLNKFQNIIDKHNEISEAELLTYEREMFLELAKTPQTIEKLQAIVG.

Residues 1–384 (MQNEIKKVCV…SWHYGPFELL (384 aa)) are 3-hydroxyacyl-CoA dehydrogenase. An enoyl-CoA hydratase/isomerase region spans residues 453–720 (FVITTKMNSL…TIEKLQAIVG (268 aa)).

It in the N-terminal section; belongs to the 3-hydroxyacyl-CoA dehydrogenase family. The protein in the C-terminal section; belongs to the enoyl-CoA hydratase/isomerase family.

The catalysed reaction is a (3S)-3-hydroxyacyl-CoA + NAD(+) = a 3-oxoacyl-CoA + NADH + H(+). It catalyses the reaction a (3S)-3-hydroxyacyl-CoA = a (2E)-enoyl-CoA + H2O. The enzyme catalyses a 4-saturated-(3S)-3-hydroxyacyl-CoA = a (3E)-enoyl-CoA + H2O. It carries out the reaction a (3Z)-enoyl-CoA = a 4-saturated (2E)-enoyl-CoA. The catalysed reaction is a (3E)-enoyl-CoA = a 4-saturated (2E)-enoyl-CoA. In Rickettsia prowazekii (strain Madrid E), this protein is Putative fatty acid oxidation complex trifunctional enzyme.